The chain runs to 90 residues: UPF0235 protein CPn_0497/CP_0257/CPj0497/CpB0517 (90 aa).

It belongs to the UPF0235 family.

The sequence is that of UPF0235 protein CPn_0497/CP_0257/CPj0497/CpB0517 from Chlamydia pneumoniae (Chlamydophila pneumoniae).